The primary structure comprises 93 residues: UPF0473 protein RBAM_024480 (93 aa).

The protein belongs to the UPF0473 family.

This Bacillus velezensis (strain DSM 23117 / BGSC 10A6 / LMG 26770 / FZB42) (Bacillus amyloliquefaciens subsp. plantarum) protein is UPF0473 protein RBAM_024480.